The primary structure comprises 343 residues: Putative MO25-like protein At4g17270 (343 aa).

It belongs to the Mo25 family.

This chain is Putative MO25-like protein At4g17270, found in Arabidopsis thaliana (Mouse-ear cress).